Reading from the N-terminus, the 233-residue chain is 2-C-methyl-D-erythritol 4-phosphate cytidylyltransferase (233 aa).

The protein belongs to the IspD/TarI cytidylyltransferase family. IspD subfamily.

The enzyme catalyses 2-C-methyl-D-erythritol 4-phosphate + CTP + H(+) = 4-CDP-2-C-methyl-D-erythritol + diphosphate. It functions in the pathway isoprenoid biosynthesis; isopentenyl diphosphate biosynthesis via DXP pathway; isopentenyl diphosphate from 1-deoxy-D-xylulose 5-phosphate: step 2/6. Functionally, catalyzes the formation of 4-diphosphocytidyl-2-C-methyl-D-erythritol from CTP and 2-C-methyl-D-erythritol 4-phosphate (MEP). The protein is 2-C-methyl-D-erythritol 4-phosphate cytidylyltransferase of Thiobacillus denitrificans (strain ATCC 25259 / T1).